The primary structure comprises 116 residues: Iron-sulfur cluster insertion protein ErpA (116 aa).

Cys-44, Cys-108, and Cys-110 together coordinate iron-sulfur cluster.

It belongs to the HesB/IscA family. Homodimer. Iron-sulfur cluster serves as cofactor.

In terms of biological role, required for insertion of 4Fe-4S clusters for at least IspG. This is Iron-sulfur cluster insertion protein ErpA from Shewanella pealeana (strain ATCC 700345 / ANG-SQ1).